A 29-amino-acid chain; its full sequence is Brevinin-2Ee (29 aa).

Cysteines 23 and 29 form a disulfide.

This sequence belongs to the frog skin active peptide (FSAP) family. Brevinin subfamily. In terms of tissue distribution, expressed by the skin glands.

It is found in the secreted. Functionally, shows antibacterial activity against representative Gram-negative and Gram-positive bacterial species, and hemolytic activity. The polypeptide is Brevinin-2Ee (Pelophylax lessonae (Pool frog)).